The sequence spans 189 residues: Proline-rich protein 29 (189 aa).

Residues 152 to 189 (SREREVRAVPPPPPPSATGTVGADVPPASDYYDAESLL) are disordered.

This Homo sapiens (Human) protein is Proline-rich protein 29 (PRR29).